Reading from the N-terminus, the 1375-residue chain is DNA-directed RNA polymerase subunit beta (1375 aa).

This sequence belongs to the RNA polymerase beta chain family. The RNAP catalytic core consists of 2 alpha, 1 beta, 1 beta' and 1 omega subunit. When a sigma factor is associated with the core the holoenzyme is formed, which can initiate transcription.

The catalysed reaction is RNA(n) + a ribonucleoside 5'-triphosphate = RNA(n+1) + diphosphate. Functionally, DNA-dependent RNA polymerase catalyzes the transcription of DNA into RNA using the four ribonucleoside triphosphates as substrates. In Malacoplasma penetrans (strain HF-2) (Mycoplasma penetrans), this protein is DNA-directed RNA polymerase subunit beta.